We begin with the raw amino-acid sequence, 451 residues long: UDP-N-acetylmuramoylalanine--D-glutamate ligase (451 aa).

118–124 (GTKGKST) provides a ligand contact to ATP.

Belongs to the MurCDEF family.

Its subcellular location is the cytoplasm. The enzyme catalyses UDP-N-acetyl-alpha-D-muramoyl-L-alanine + D-glutamate + ATP = UDP-N-acetyl-alpha-D-muramoyl-L-alanyl-D-glutamate + ADP + phosphate + H(+). The protein operates within cell wall biogenesis; peptidoglycan biosynthesis. Functionally, cell wall formation. Catalyzes the addition of glutamate to the nucleotide precursor UDP-N-acetylmuramoyl-L-alanine (UMA). This Borreliella burgdorferi (strain ZS7) (Borrelia burgdorferi) protein is UDP-N-acetylmuramoylalanine--D-glutamate ligase.